The chain runs to 385 residues: Elsinochromes biosynthesis cluster protein HP2 (385 aa).

A signal peptide spans 1 to 22 (MVLLYILIMVALIPMYMTVVQD). 2 helical membrane passes run 94–114 (TVLS…SMFD) and 148–168 (FYGQ…IVLW). The N-linked (GlcNAc...) asparagine glycan is linked to Asn187. Residues 209 to 229 (SWTFGQIVPIVLLVSPLVAAF) traverse the membrane as a helical segment. The N-linked (GlcNAc...) asparagine glycan is linked to Asn248. 2 consecutive transmembrane segments (helical) span residues 309 to 329 (AILF…LPLA) and 344 to 364 (YYAF…AVPF).

It localises to the membrane. Part of the gene cluster that mediates the biosynthesis of elsinochromes, pigments consisting of at least four interconvertible tautomers (A, B, C and D) that have a core phenolic quinone to which various side chains are attached and which play an important role in fungal pathogenesis. The non-reducing polyketide synthase PKS1 was proposed to iteratively catalyze decarboxylation between acetyl-CoA and malonyl-CoA subunits for polyketide chain elongation. The released polyketide undergoes cyclization to form an aromatic ring, and proceeds via serial modification steps to produce the heptaketide back- bone of elsinochrome. As elsinochrome has a symmetrical structure, two identical heptaketides are fused to form a core 1,2-dihydrobenzo-perylene ring structure, which can then be successively modified to produce the various derivatives of elsinochrome. Some of these reactions may be cooperatively carried out, at least in part, by the products of RDT1, OXR1 and PKS1. PRF1, embedded within the elsinochrome cluster possibly functions to stabilize some of the biosynthetic enzymes required for elsinochrome production. As prefoldin is a hexamer containing 2 a and 4 b subunits, additional prefoldin subunits, whose coding genes may not immediately link to the elsinochrome biosynthetic gene cluster, are required to fulfill the chaperone function. In addition, no methyltransferase-coding gene exists within the biosynthetic gene cluster, even though elsinochrome has four methyl groups at positions C3, C7, C8 and C12. Apparently, the identified gene cluster does not contain the entire entourage of genes responsible for elsinochrome biosynthesis. Once elsinochrome is synthesized, it must be exported outside the fungal cells, which is probably accomplished by the ECT1 transporter, to avoid toxicity. In Elsinoe fawcettii (Citrus scab fungus), this protein is Elsinochromes biosynthesis cluster protein HP2.